We begin with the raw amino-acid sequence, 350 residues long: Enoyl-[acyl-carrier-protein] reductase, mitochondrial (350 aa).

The N-terminal 12 residues, 1-12 (MWLGLRLFHRPF), are a transit peptide targeting the mitochondrion. The Proton donor role is filled by Y68. NADP(+) contacts are provided by residues N141, 167-170 (NSGV), 190-192 (RDR), 259-262 (YGGM), 284-286 (FWV), and K345.

This sequence belongs to the zinc-containing alcohol dehydrogenase family. Quinone oxidoreductase subfamily. Homodimer. As to expression, expressed in the developing pronephros.

The protein resides in the mitochondrion. The enzyme catalyses a 2,3-saturated acyl-[ACP] + NADP(+) = a (2E)-enoyl-[ACP] + NADPH + H(+). In terms of biological role, catalyzes the NADPH-dependent reduction of trans-2-enoyl thioesters in mitochondrial fatty acid synthesis (fatty acid synthesis type II). Fatty acid chain elongation in mitochondria uses acyl carrier protein (ACP) as an acyl group carrier, but the enzyme accepts both ACP and CoA thioesters as substrates in vitro. May provide the octanoyl chain used for lipoic acid biosynthesis, regulating protein lipoylation and mitochondrial respiratory activity. Involved in iron homeostasis; affecting Fe-S cluster assembly and ceramide metabolism. Required for proper morphology and bioenergetic functions of mitochondria. Required for maintenance of neurons. Functions in pronephros development, regulating late differentiation of all pronephric tubule segments. The polypeptide is Enoyl-[acyl-carrier-protein] reductase, mitochondrial (mecr) (Xenopus tropicalis (Western clawed frog)).